The primary structure comprises 509 residues: ATP synthase subunit alpha, mitochondrial (509 aa).

171 to 178 is an ATP binding site; that stretch reads GDRQTGKT.

Belongs to the ATPase alpha/beta chains family. In terms of assembly, F-type ATPases have 2 components, CF(1) - the catalytic core - and CF(0) - the membrane proton channel. CF(1) has five subunits: alpha(3), beta(3), gamma(1), delta(1), epsilon(1). CF(0) has three main subunits: a, b and c.

Its subcellular location is the mitochondrion. The protein resides in the mitochondrion inner membrane. In terms of biological role, mitochondrial membrane ATP synthase (F(1)F(0) ATP synthase or Complex V) produces ATP from ADP in the presence of a proton gradient across the membrane which is generated by electron transport complexes of the respiratory chain. F-type ATPases consist of two structural domains, F(1) - containing the extramembraneous catalytic core, and F(0) - containing the membrane proton channel, linked together by a central stalk and a peripheral stalk. During catalysis, ATP synthesis in the catalytic domain of F(1) is coupled via a rotary mechanism of the central stalk subunits to proton translocation. Subunits alpha and beta form the catalytic core in F(1). Rotation of the central stalk against the surrounding alpha(3)beta(3) subunits leads to hydrolysis of ATP in three separate catalytic sites on the beta subunits. Subunit alpha does not bear the catalytic high-affinity ATP-binding sites. In Triticum aestivum (Wheat), this protein is ATP synthase subunit alpha, mitochondrial (ATPA).